We begin with the raw amino-acid sequence, 195 residues long: Imidazoleglycerol-phosphate dehydratase (195 aa).

Belongs to the imidazoleglycerol-phosphate dehydratase family.

The protein resides in the cytoplasm. It carries out the reaction D-erythro-1-(imidazol-4-yl)glycerol 3-phosphate = 3-(imidazol-4-yl)-2-oxopropyl phosphate + H2O. Its pathway is amino-acid biosynthesis; L-histidine biosynthesis; L-histidine from 5-phospho-alpha-D-ribose 1-diphosphate: step 6/9. In Campylobacter concisus (strain 13826), this protein is Imidazoleglycerol-phosphate dehydratase.